The following is a 154-amino-acid chain: Transcription antitermination protein NusB (154 aa).

This sequence belongs to the NusB family.

Its function is as follows. Involved in transcription antitermination. Required for transcription of ribosomal RNA (rRNA) genes. Binds specifically to the boxA antiterminator sequence of the ribosomal RNA (rrn) operons. This is Transcription antitermination protein NusB from Desulfosudis oleivorans (strain DSM 6200 / JCM 39069 / Hxd3) (Desulfococcus oleovorans).